Here is a 499-residue protein sequence, read N- to C-terminus: MKKKYILAIDQGTTSSRAILFDHKGRIIGMAQREFTQIFPQPGWVEHNPRDIMTSVYTTITELLNNTQIDVRAIAGIGITNQRETTVIWDRQTGQPIYNAIVWQSRQTKDICDQLTTAGYQDMVHAKTGLLIDAYFSGTKVKWILDHVENAHTQAARGELAFGTIDTWIIWNLTGGQVHVTDYSNASRTLLYDIHALRWDPDLLTMLDIPAAILPDVRSSSEIYGLTQTPYFHGEQIPIAGIAGDQQAALFGQACFEPGMAKNTYGTGCFMLMHTGKKAVESQNGLLTTIAWGLNGEIEYALEGSIFIAGSVVQWLRDGLRMFGKASDSQAYADRVSDNGGVYVVPAFVGLGAPYWRSDVRGAVFGLTRSTTKEHFVRAALESMAYQTRDVLSAMQADADIELKELRTDGAAITNDFMAQFQSDILAVPVLRSQIAETTALGAAYLAGLATGFWSSREEMTQHWAINRCFKPQMDKEQREHLYAGWKQAVEATLGFRVA.

Residue threonine 13 coordinates ADP. Positions 13, 14, and 15 each coordinate ATP. Threonine 13 provides a ligand contact to sn-glycerol 3-phosphate. Arginine 17 is a binding site for ADP. Positions 83, 84, 135, and 245 each coordinate sn-glycerol 3-phosphate. Positions 83, 84, 135, 245, and 246 each coordinate glycerol. Residues threonine 267 and glycine 310 each coordinate ADP. Threonine 267, glycine 310, glutamine 314, and alanine 411 together coordinate ATP. 2 residues coordinate ADP: alanine 411 and asparagine 415.

The protein belongs to the FGGY kinase family.

The catalysed reaction is glycerol + ATP = sn-glycerol 3-phosphate + ADP + H(+). It participates in polyol metabolism; glycerol degradation via glycerol kinase pathway; sn-glycerol 3-phosphate from glycerol: step 1/1. Its activity is regulated as follows. Inhibited by fructose 1,6-bisphosphate (FBP). Its function is as follows. Key enzyme in the regulation of glycerol uptake and metabolism. Catalyzes the phosphorylation of glycerol to yield sn-glycerol 3-phosphate. In Xylella fastidiosa (strain M23), this protein is Glycerol kinase.